A 305-amino-acid polypeptide reads, in one-letter code: Outer membrane protein assembly factor BamD (305 aa).

The N-terminal stretch at Met-1–Gly-24 is a signal peptide. Cys-25 carries the N-palmitoyl cysteine lipid modification. Cys-25 carries the S-diacylglycerol cysteine lipid modification. TPR repeat units lie at residues Val-41–Ser-74, Arg-78–Asn-111, Ser-113–Gln-136, and Ala-174–Thr-207.

This sequence belongs to the BamD family. In terms of assembly, part of the Bam complex.

Its subcellular location is the cell outer membrane. In terms of biological role, part of the outer membrane protein assembly complex, which is involved in assembly and insertion of beta-barrel proteins into the outer membrane. This is Outer membrane protein assembly factor BamD from Caulobacter vibrioides (strain ATCC 19089 / CIP 103742 / CB 15) (Caulobacter crescentus).